Reading from the N-terminus, the 377-residue chain is N-acetyldiaminopimelate deacetylase (377 aa).

Asp-70 is an active-site residue. Glu-129 serves as the catalytic Proton acceptor.

This sequence belongs to the peptidase M20A family. N-acetyldiaminopimelate deacetylase subfamily.

The enzyme catalyses N-acetyl-(2S,6S)-2,6-diaminopimelate + H2O = (2S,6S)-2,6-diaminopimelate + acetate. The protein operates within amino-acid biosynthesis; L-lysine biosynthesis via DAP pathway; LL-2,6-diaminopimelate from (S)-tetrahydrodipicolinate (acetylase route): step 3/3. Functionally, catalyzes the conversion of N-acetyl-diaminopimelate to diaminopimelate and acetate. This chain is N-acetyldiaminopimelate deacetylase, found in Geobacillus thermodenitrificans (strain NG80-2).